A 51-amino-acid chain; its full sequence is Light-harvesting protein B-800/850 beta chain (51 aa).

Residues 2–23 (ADDANKVWPSGLTTAEAEELQK) lie on the Cytoplasmic side of the membrane. A helical membrane pass occupies residues 24–46 (GLVDGTRVFGVIAVLAHILAYAY). Residue His-40 coordinates a bacteriochlorophyll. Residues 47-51 (TPWLH) lie on the Periplasmic side of the membrane.

Belongs to the antenna complex beta subunit family. In terms of assembly, an alpha/beta heterodimer conjugated to 3 bacteriochlorophyll molecules. The core complex is formed by different alpha and beta chains, binding bacteriochlorophyll molecules, and arranged most probably in tetrameric structures disposed around the reaction center. The non-pigmented gamma chains may constitute additional components.

It is found in the cell inner membrane. Its function is as follows. Antenna complexes are light-harvesting systems, which transfer the excitation energy to the reaction centers. In Rubrivivax gelatinosus (Rhodocyclus gelatinosus), this protein is Light-harvesting protein B-800/850 beta chain (pucB).